The sequence spans 24 residues: Gaegurin-6 (24 aa).

C18 and C24 form a disulfide bridge.

Belongs to the frog skin active peptide (FSAP) family. Brevinin subfamily. Monomer. Expressed by the skin glands.

It is found in the secreted. Functionally, has a non-hemolytic activity. Has a broad spectrum of activity against both Gram-positive and Gram-negative bacteria, fungi and protozoa. In Glandirana rugosa (Japanese wrinkled frog), this protein is Gaegurin-6 (GGN6).